We begin with the raw amino-acid sequence, 475 residues long: E3 ubiquitin-protein ligase TRIM21 (475 aa).

The RING-type zinc finger occupies 16–55 (CPICLDPFVEPVSIECGHSFCQECISQVGKGGGSVCPVCR). Zn(2+) contacts are provided by Cys-92, His-95, Cys-114, and His-120. Residues 92 to 123 (CAVHGERLHLFCEKDGKALCWVCAQSRKHRDH) form a B box-type zinc finger. Positions 128–238 (LEEAAQEYQE…ISELDRRCHS (111 aa)) form a coiled coil. Phosphoserine is present on Ser-266. One can recognise a B30.2/SPRY domain in the interval 268-465 (ELRSVCHVPG…NTAPLTLCPL (198 aa)).

The protein belongs to the TRIM/RBCC family. In terms of assembly, homotrimer. Interacts (via C-terminus) with IRF8 (via C-terminus). Component of a SCF(SKP2)-like complex containing CUL1, SKP1, TRIM21 and SKP2. Interacts with CALR, CUL1, FBXW11, HSPA5, IKBKB, IRF3, SKP1 and VCP. Interacts with SKP2; the interaction with SKP2 does not depend on an intact F-box domain. Interacts (via N-terminus and C-terminus) with DCP2 (via N-terminus and C-terminus). Interacts with ULK1, BECN1 and with ATG8 family members, including GABARAP, GABARAPL1, GABARAPL2 and MAP1LC3C/LC3C. Interacts with TRIM21 and SQSTM1/sequestosome 1. Interacts with IRF3. Interacts (via the SPRY domain) with NMI (via coiled-coil domain); the interaction promotes 'Lys-63'-linked ubiquitination of NMI. Interacts with IFI35 and NMI; the interaction facilitates NMI-IFI35 complex formation. As to quaternary structure, (Microbial infection) Interacts (via B30.2/SPRY domain) with severe fever with thrombocytopenia syndrome virus (SFTSV) NSs; this interaction activates NFE2L2-mediated transcriptional activation of antioxidant genes. In terms of processing, autoubiquitinated; does not lead to its proteasomal degradation. Deubiquitinated by USP4; leading to its stabilization. Isoform 1 and isoform 2 are expressed in fetal and adult heart and fetal lung.

It is found in the cytoplasm. It localises to the cytoplasmic vesicle. The protein resides in the autophagosome. Its subcellular location is the nucleus. The protein localises to the P-body. It is found in the stress granule. It catalyses the reaction S-ubiquitinyl-[E2 ubiquitin-conjugating enzyme]-L-cysteine + [acceptor protein]-L-lysine = [E2 ubiquitin-conjugating enzyme]-L-cysteine + N(6)-ubiquitinyl-[acceptor protein]-L-lysine.. It participates in protein modification; protein ubiquitination. E3 ubiquitin-protein ligase whose activity is dependent on E2 enzymes, UBE2D1, UBE2D2, UBE2E1 and UBE2E2. Forms a ubiquitin ligase complex in cooperation with the E2 UBE2D2 that is used not only for the ubiquitination of USP4 and IKBKB but also for its self-ubiquitination. Component of cullin-RING-based SCF (SKP1-CUL1-F-box protein) E3 ubiquitin-protein ligase complexes such as SCF(SKP2)-like complexes. A TRIM21-containing SCF(SKP2)-like complex is shown to mediate ubiquitination of CDKN1B ('Thr-187' phosphorylated-form), thereby promoting its degradation by the proteasome. Monoubiquitinates IKBKB that will negatively regulates Tax-induced NF-kappa-B signaling. Negatively regulates IFN-beta production post-pathogen recognition by catalyzing polyubiquitin-mediated degradation of IRF3. Mediates the ubiquitin-mediated proteasomal degradation of IgG1 heavy chain, which is linked to the VCP-mediated ER-associated degradation (ERAD) pathway. Promotes IRF8 ubiquitination, which enhanced the ability of IRF8 to stimulate cytokine genes transcription in macrophages. Plays a role in the regulation of the cell cycle progression. Enhances the decapping activity of DCP2. Exists as a ribonucleoprotein particle present in all mammalian cells studied and composed of a single polypeptide and one of four small RNA molecules. At least two isoforms are present in nucleated and red blood cells, and tissue specific differences in RO/SSA proteins have been identified. The common feature of these proteins is their ability to bind HY RNAs.2. Involved in the regulation of innate immunity and the inflammatory response in response to IFNG/IFN-gamma. Organizes autophagic machinery by serving as a platform for the assembly of ULK1, Beclin 1/BECN1 and ATG8 family members and recognizes specific autophagy targets, thus coordinating target recognition with assembly of the autophagic apparatus and initiation of autophagy. Also regulates autophagy through FIP200/RB1CC1 ubiquitination and subsequent decreased protein stability. Represses the innate antiviral response by facilitating the formation of the NMI-IFI35 complex through 'Lys-63'-linked ubiquitination of NMI. During viral infection, promotes cell pyroptosis by mediating 'Lys-6'-linked ubiquitination of ISG12a/IFI27, facilitating its translocation into the mitochondria and subsequent CASP3 activation. When up-regulated through the IFN/JAK/STAT signaling pathway, promotes 'Lys-27'-linked ubiquitination of MAVS, leading to the recruitment of TBK1 and up-regulation of innate immunity. Mediates 'Lys-63'-linked polyubiquitination of G3BP1 in response to heat shock, leading to stress granule disassembly. This Homo sapiens (Human) protein is E3 ubiquitin-protein ligase TRIM21.